The primary structure comprises 330 residues: Peroxisomal membrane protein PEX13 (330 aa).

Pro residues predominate over residues 1-14 (MSAPPTNQPPPLPP). Positions 1–20 (MSAPPTNQPPPLPPRSFDNQ) are disordered. The chain crosses the membrane as a helical span at residues 193-213 (ASVNWPAALFWVVAIGGPWLI). The SH3 domain occupies 235–300 (APHYTAQALF…PINYVRIVGK (66 aa)).

It belongs to the peroxin-13 family. As to quaternary structure, interacts with PEX14/prx-14; forming the PEX13-PEX14 docking complex.

The protein resides in the peroxisome membrane. Its function is as follows. Component of the PEX13-PEX14 docking complex, a translocon channel that specifically mediates the import of peroxisomal cargo proteins bound to PEX5/prx-5 receptor. The PEX13-PEX14 docking complex forms a large import pore which can be opened to a diameter of about 9 nm. Mechanistically, PEX5/prx-5 receptor along with cargo proteins associates with the PEX14/prx-14 subunit of the PEX13-PEX14 docking complex in the cytosol, leading to the insertion of the receptor into the organelle membrane with the concomitant translocation of the cargo into the peroxisome matrix. The sequence is that of Peroxisomal membrane protein PEX13 (prx-13) from Caenorhabditis elegans.